The chain runs to 252 residues: Ribosomal RNA small subunit methyltransferase A (252 aa).

Asn11, Leu13, Gly38, Glu60, Asp82, and Asn99 together coordinate S-adenosyl-L-methionine.

It belongs to the class I-like SAM-binding methyltransferase superfamily. rRNA adenine N(6)-methyltransferase family. RsmA subfamily.

It is found in the cytoplasm. The enzyme catalyses adenosine(1518)/adenosine(1519) in 16S rRNA + 4 S-adenosyl-L-methionine = N(6)-dimethyladenosine(1518)/N(6)-dimethyladenosine(1519) in 16S rRNA + 4 S-adenosyl-L-homocysteine + 4 H(+). Functionally, specifically dimethylates two adjacent adenosines (A1518 and A1519) in the loop of a conserved hairpin near the 3'-end of 16S rRNA in the 30S particle. May play a critical role in biogenesis of 30S subunits. This is Ribosomal RNA small subunit methyltransferase A from Hydrogenobaculum sp. (strain Y04AAS1).